The sequence spans 133 residues: Large ribosomal subunit protein uL14 (133 aa).

This sequence belongs to the universal ribosomal protein uL14 family. In terms of assembly, part of the 50S ribosomal subunit. Forms a cluster with proteins L3 and L19. In the 70S ribosome, L14 and L19 interact and together make contacts with the 16S rRNA in bridges B5 and B8.

Functionally, binds to 23S rRNA. Forms part of two intersubunit bridges in the 70S ribosome. This chain is Large ribosomal subunit protein uL14, found in Gloeobacter violaceus (strain ATCC 29082 / PCC 7421).